The chain runs to 732 residues: Catalase-peroxidase (732 aa).

Residues M1 to A15 form the signal peptide. Positions W96–Y219 form a cross-link, tryptophyl-tyrosyl-methioninium (Trp-Tyr) (with M-245). Residue H97 is the Proton acceptor of the active site. The tryptophyl-tyrosyl-methioninium (Tyr-Met) (with W-96) cross-link spans Y219–M245. Residue H260 participates in heme b binding.

The protein belongs to the peroxidase family. Peroxidase/catalase subfamily. In terms of assembly, homodimer or homotetramer. Heme b serves as cofactor. Post-translationally, formation of the three residue Trp-Tyr-Met cross-link is important for the catalase, but not the peroxidase activity of the enzyme.

The enzyme catalyses H2O2 + AH2 = A + 2 H2O. It catalyses the reaction 2 H2O2 = O2 + 2 H2O. Its function is as follows. Bifunctional enzyme with both catalase and broad-spectrum peroxidase activity. This Acidobacterium capsulatum (strain ATCC 51196 / DSM 11244 / BCRC 80197 / JCM 7670 / NBRC 15755 / NCIMB 13165 / 161) protein is Catalase-peroxidase.